Reading from the N-terminus, the 582-residue chain is NAB transcription cofactor mab-10 (582 aa).

A compositionally biased stretch (low complexity) spans 1 to 70 (MSSSSSSSLP…SSSSQRQSTS (70 aa)). 4 disordered regions span residues 1–84 (MSSS…MPTP), 257–287 (SDQQ…PAGI), 333–365 (PPSS…SPFL), and 516–582 (SRKR…LPES). The tract at residues 83-161 (TPTTLSEWQL…EYSQDQTAFN (79 aa)) is NCD1. 2 stretches are compositionally biased toward low complexity: residues 257–276 (SDQQ…STSS) and 333–345 (PPSS…PSTS). An NCD2 region spans residues 396 to 519 (LSTAQISRLA…GYNYAKSRKR (124 aa)). Basic and acidic residues predominate over residues 573–582 (EKMKGELPES).

The protein belongs to the NAB family. Interacts with transcription factor lin-29 (via C-terminus).

Its subcellular location is the nucleus. Transcriptional cofactor. Heterochronic protein, involved in timing of a subset of differentiation events during the larval-to-adult transition. Promotes hypodermal terminal differentiation, together with transcription factor lin-29, perhaps as part of a transcriptional complex. Involved in regulating molting by repressing the expression of nuclear hormone receptors nhr-23 and nhr-25 in the adult hypoderm, probably acting in concert with lin-29. The polypeptide is NAB transcription cofactor mab-10 (Caenorhabditis elegans).